The primary structure comprises 54 residues: U1-ctenitoxin-Pr1a (54 aa).

Cystine bridges form between cysteine 2–cysteine 19, cysteine 9–cysteine 25, cysteine 16–cysteine 51, cysteine 18–cysteine 39, and cysteine 27–cysteine 37.

As to expression, expressed by the venom gland.

The protein localises to the secreted. Functionally, omega-agatoxins are antagonists of voltage-gated calcium channels (Cav). Causes rapid general flaccid paralysis followed by death in 10-30 minutes when injected in mice at dose levels of 5 ug per mouse. The sequence is that of U1-ctenitoxin-Pr1a from Phoneutria reidyi (Brazilian Amazonian armed spider).